A 72-amino-acid polypeptide reads, in one-letter code: SRY-related protein AES1 (72 aa).

A DNA-binding region (HMG box) is located at residues 1–69 (VKRPMNAFMV…KHMADYPDYK (69 aa)).

The protein localises to the nucleus. This chain is SRY-related protein AES1, found in Alligator mississippiensis (American alligator).